Consider the following 208-residue polypeptide: 28 kDa heat- and acid-stable phosphoprotein homolog (208 aa).

2 disordered regions span residues 1 to 133 (MAGG…VTKK) and 145 to 208 (LSRR…LGLA). The span at 16 to 44 (FGRDYERSKGKISRDRVYDEEDIIKRNQE) shows a compositional bias: basic and acidic residues. Low complexity-rich tracts occupy residues 52 to 69 (GSES…NKSK) and 84 to 100 (RNPN…PTTK). Acidic residues predominate over residues 105-121 (SDSEDDSDKESDSEDEI). Positions 137–206 (INVNAKVELS…EKMAERRRLG (70 aa)) form a coiled coil. Composition is skewed to basic and acidic residues over residues 145–154 (LSRREKEELA) and 162–208 (QNEK…LGLA).

Belongs to the PDAP1 family.

This is 28 kDa heat- and acid-stable phosphoprotein homolog from Dictyostelium discoideum (Social amoeba).